A 661-amino-acid chain; its full sequence is UvrABC system protein C (661 aa).

Residues 52–130 (HKPGVYRMVD…IKRLHPRFNV (79 aa)) enclose the GIY-YIG domain. Residues 240 to 275 (QSIKNDMVQAMHKAAKNFDFEQAAAYRDRLSALSHI) form the UVR domain.

This sequence belongs to the UvrC family. In terms of assembly, interacts with UvrB in an incision complex.

It is found in the cytoplasm. The UvrABC repair system catalyzes the recognition and processing of DNA lesions. UvrC both incises the 5' and 3' sides of the lesion. The N-terminal half is responsible for the 3' incision and the C-terminal half is responsible for the 5' incision. This is UvrABC system protein C from Bartonella henselae (strain ATCC 49882 / DSM 28221 / CCUG 30454 / Houston 1) (Rochalimaea henselae).